We begin with the raw amino-acid sequence, 239 residues long: Large ribosomal subunit protein uL2 (239 aa).

A disordered region spans residues 200 to 239 (VNHPHGGKEHHIGRPSTVSRRAPPGRKVGHIAARRTGRRK). The segment covering 222 to 239 (PPGRKVGHIAARRTGRRK) has biased composition (basic residues).

This sequence belongs to the universal ribosomal protein uL2 family. Part of the 50S ribosomal subunit. Forms a bridge to the 30S subunit in the 70S ribosome.

Its function is as follows. One of the primary rRNA binding proteins. Required for association of the 30S and 50S subunits to form the 70S ribosome, for tRNA binding and peptide bond formation. It has been suggested to have peptidyltransferase activity; this is somewhat controversial. Makes several contacts with the 16S rRNA in the 70S ribosome. The chain is Large ribosomal subunit protein uL2 from Thermococcus onnurineus (strain NA1).